The primary structure comprises 727 residues: Catalase-peroxidase (727 aa).

Residues 1-26 form a disordered region; sequence MSDEKKCPVTGRTSSQVAGSGTSNKD. Residues 11 to 26 are compositionally biased toward polar residues; sequence GRTSSQVAGSGTSNKD. A cross-link (tryptophyl-tyrosyl-methioninium (Trp-Tyr) (with M-245)) is located at residues 96–219; it reads WHSAGTYRIG…LAAVQMGLIY (124 aa). H97 functions as the Proton acceptor in the catalytic mechanism. The tryptophyl-tyrosyl-methioninium (Tyr-Met) (with W-96) cross-link spans 219–245; the sequence is YVNPEGPNGDPNAVASGKDVRETFARM. Heme b is bound at residue H260. Residues 346–362 are compositionally biased toward basic and acidic residues; it reads SDPEAKKAVPDAHDPSK. The disordered stretch occupies residues 346 to 365; sequence SDPEAKKAVPDAHDPSKTHP.

The protein belongs to the peroxidase family. Peroxidase/catalase subfamily. Homodimer or homotetramer. Requires heme b as cofactor. Post-translationally, formation of the three residue Trp-Tyr-Met cross-link is important for the catalase, but not the peroxidase activity of the enzyme.

It catalyses the reaction H2O2 + AH2 = A + 2 H2O. The catalysed reaction is 2 H2O2 = O2 + 2 H2O. Functionally, bifunctional enzyme with both catalase and broad-spectrum peroxidase activity. The sequence is that of Catalase-peroxidase from Maridesulfovibrio salexigens (strain ATCC 14822 / DSM 2638 / NCIMB 8403 / VKM B-1763) (Desulfovibrio salexigens).